A 142-amino-acid chain; its full sequence is Galactose-6-phosphate isomerase subunit LacA (142 aa).

It belongs to the LacAB/RpiB family. Heteromultimeric protein consisting of LacA and LacB.

It catalyses the reaction aldehydo-D-galactose 6-phosphate = keto-D-tagatose 6-phosphate. Its pathway is carbohydrate metabolism; D-galactose 6-phosphate degradation; D-tagatose 6-phosphate from D-galactose 6-phosphate: step 1/1. The chain is Galactose-6-phosphate isomerase subunit LacA from Staphylococcus epidermidis (strain ATCC 35984 / DSM 28319 / BCRC 17069 / CCUG 31568 / BM 3577 / RP62A).